A 184-amino-acid chain; its full sequence is UPF0340 protein TTE0860 (184 aa).

Belongs to the UPF0340 family.

The chain is UPF0340 protein TTE0860 from Caldanaerobacter subterraneus subsp. tengcongensis (strain DSM 15242 / JCM 11007 / NBRC 100824 / MB4) (Thermoanaerobacter tengcongensis).